We begin with the raw amino-acid sequence, 138 residues long: Endonuclease V (138 aa).

Residue T2 is the Nucleophile; via amide nitrogen of the active site. E23 acts as the Proton acceptor in catalysis.

In terms of assembly, monomer.

The enzyme catalyses Cleaves the N-glycosidic bond between the 5'-pyrimidine residue in cyclobutadipyrimidine (in DNA) and the corresponding deoxy-D-ribose residue.. It carries out the reaction 2'-deoxyribonucleotide-(2'-deoxyribose 5'-phosphate)-2'-deoxyribonucleotide-DNA = a 3'-end 2'-deoxyribonucleotide-(2,3-dehydro-2,3-deoxyribose 5'-phosphate)-DNA + a 5'-end 5'-phospho-2'-deoxyribonucleoside-DNA + H(+). Its function is as follows. Participates in the repair of UV-damaged DNA by excising pyrimidine dimers that are the major UV-lesions. DNA glycosylase activity hydrolyzes the glycosylic bond of the 5' pyrimidine of the dimer. This leaves apurinic/apyrimidic (AP) sites in the DNA. These AP sites are removed by the AP lyase activity which cleaves the intrapyrimidine phosphodiester bond. Catalysis proceeds via a protonated imine covalent intermediate between the alpha-amino group of the N-terminal threonine residue and the C1' of the deoxyribose sugar of the 5' pyrimidine at the dimer site. The chain is Endonuclease V from Enterobacteria phage T4 (Bacteriophage T4).